We begin with the raw amino-acid sequence, 319 residues long: Glutathione synthetase (319 aa).

The 187-residue stretch at 125 to 311 folds into the ATP-grasp domain; it reads KLFTAWFPEL…ITGMLMDAIE (187 aa). 151–207 contacts ATP; the sequence is HQEHGDIILKPLDGMGGTSIFRVKQDDPNLSVIIETLTELSSRFCMAQNFLPAIKEG. The Mg(2+) site is built by Glu281 and Asn283.

It belongs to the prokaryotic GSH synthase family. The cofactor is Mg(2+). Requires Mn(2+) as cofactor.

It catalyses the reaction gamma-L-glutamyl-L-cysteine + glycine + ATP = glutathione + ADP + phosphate + H(+). Its pathway is sulfur metabolism; glutathione biosynthesis; glutathione from L-cysteine and L-glutamate: step 2/2. The polypeptide is Glutathione synthetase (Yersinia pestis).